Reading from the N-terminus, the 493-residue chain is Glutamyl-tRNA(Gln) amidotransferase subunit A (493 aa).

Residues K79 and S159 each act as charge relay system in the active site. S183 functions as the Acyl-ester intermediate in the catalytic mechanism.

The protein belongs to the amidase family. GatA subfamily. In terms of assembly, heterotrimer of A, B and C subunits.

The enzyme catalyses L-glutamyl-tRNA(Gln) + L-glutamine + ATP + H2O = L-glutaminyl-tRNA(Gln) + L-glutamate + ADP + phosphate + H(+). In terms of biological role, allows the formation of correctly charged Gln-tRNA(Gln) through the transamidation of misacylated Glu-tRNA(Gln) in organisms which lack glutaminyl-tRNA synthetase. The reaction takes place in the presence of glutamine and ATP through an activated gamma-phospho-Glu-tRNA(Gln). In Agrobacterium fabrum (strain C58 / ATCC 33970) (Agrobacterium tumefaciens (strain C58)), this protein is Glutamyl-tRNA(Gln) amidotransferase subunit A.